The sequence spans 190 residues: Fe/S biogenesis protein NfuA (190 aa).

Residues C148 and C151 each coordinate [4Fe-4S] cluster.

It belongs to the NfuA family. As to quaternary structure, homodimer. It depends on [4Fe-4S] cluster as a cofactor.

Involved in iron-sulfur cluster biogenesis. Binds a 4Fe-4S cluster, can transfer this cluster to apoproteins, and thereby intervenes in the maturation of Fe/S proteins. Could also act as a scaffold/chaperone for damaged Fe/S proteins. The sequence is that of Fe/S biogenesis protein NfuA from Baumannia cicadellinicola subsp. Homalodisca coagulata.